The sequence spans 548 residues: Probable malate:quinone oxidoreductase (548 aa).

Belongs to the MQO family. It depends on FAD as a cofactor.

The enzyme catalyses (S)-malate + a quinone = a quinol + oxaloacetate. The protein operates within carbohydrate metabolism; tricarboxylic acid cycle; oxaloacetate from (S)-malate (quinone route): step 1/1. The polypeptide is Probable malate:quinone oxidoreductase (Escherichia coli O127:H6 (strain E2348/69 / EPEC)).